A 263-amino-acid chain; its full sequence is Hydroxyethylthiazole kinase 1 (263 aa).

A substrate-binding site is contributed by M42. ATP contacts are provided by K118 and T164. Substrate is bound at residue G191.

This sequence belongs to the Thz kinase family. Mg(2+) serves as cofactor.

The enzyme catalyses 5-(2-hydroxyethyl)-4-methylthiazole + ATP = 4-methyl-5-(2-phosphooxyethyl)-thiazole + ADP + H(+). Its pathway is cofactor biosynthesis; thiamine diphosphate biosynthesis; 4-methyl-5-(2-phosphoethyl)-thiazole from 5-(2-hydroxyethyl)-4-methylthiazole: step 1/1. Functionally, catalyzes the phosphorylation of the hydroxyl group of 4-methyl-5-beta-hydroxyethylthiazole (THZ). In Clostridium botulinum (strain Okra / Type B1), this protein is Hydroxyethylthiazole kinase 1.